The chain runs to 245 residues: tRNA pseudouridine synthase A (245 aa).

Asp-52 (nucleophile) is an active-site residue. Tyr-110 provides a ligand contact to substrate.

Belongs to the tRNA pseudouridine synthase TruA family. Homodimer.

The enzyme catalyses uridine(38/39/40) in tRNA = pseudouridine(38/39/40) in tRNA. Formation of pseudouridine at positions 38, 39 and 40 in the anticodon stem and loop of transfer RNAs. This Borrelia hermsii (strain HS1 / DAH) protein is tRNA pseudouridine synthase A.